The primary structure comprises 1380 residues: MAQTLSFNGRRRVRKFFGKIPEVAEMPNLIEVQKASYDQFLMVDEPQGGRPDEGLQAVFKSVFPIKDFSGASMLEFVSYEFEAPKFDVEECRQRDLTYAAPLKVTLRLIVFDIDEDTGAKSIKDIKEQNVYMGDMPLMTDNGTFIVNGTERVIVSQMHRSPGVFFDHDKGKSHSSGKLLFAARVIPYRGSWLDIEFDAKDIVHARIDRRRKIPVTSLLMALGMDGEEILDTFYTKSLYQRDGEGWRVPFQPDALKGQKTLADMIDADTGEVVVESGKKLTPRLLRQLQEKGLKALKATDDDLYGNYLAEDVVNFETGEIYLEAGDEIDEKTLPVILSAGFDEIPVLDIDHINIGAYIRNTLSADKNENRQDALFDIYRVMRPGEPPTMDSAEAMFNALFFDAERYDLSAVGRVKMNMRLDLDVPDTVRTLRKEDILAVVKMLVELRDGKGEIDDIDNLGNRRVRSVGELMENQYRLGLLRMERAIKERMSSIEIDTVMPQDLINAKPAAAAVREFFGSSQLSQFMDQVNPLSEITHKRRLSALGPGGLTRERAGFEVRDVHPTHYGRICPIETPEGPNIGLINSLATFARVNKYGFIESPYRKIVDGKVTNDVVYLSAMEEAKYHVAQANSVLDDDGSFSEEFVVCRHAGEVMLAPRDNINLMDVSPKQLVSVAAALIPFLENDDANRALMGSNMQRQAVPLLRAEAPFVGTGMEPVVARDSGAAIAARRGGIVDQVDATRIVIRATEDLDPSKSGVDIYRLQKFQRSNQNTCVNQRPLVTVGDVINKGDIIADGPSTDLGDLALGRNALVAFMPWNGYNYEDSILLSERIVRDDVFTSIHIEEFEVMARDTKLGPEEITRDIPNVSEEALKNLDEAGIVYIGAEVQPGDILVGKITPKGESPMTPEEKLLRAIFGEKASDVRDTSMRMPPGTFGTVVEVRVFNRHGVEKDERAMAIEREEIERLAKDRDDEQAILDRNVYARLVDMLRGHVAVAGPKGFKKGTELSNVVISEYPRSQWWMFAIEDEKAQGEIEALRAQYDESKSRLEQRFMDKVEKVQRGDEMPPGVMKMVKVFVAVKRKIQPGDKMAGRHGNKGVVSRIVPIEDMPFLEDGTHVDVVLNPLGVPSRMNVGQILETHLGWACAGMGKKIGAMLDAYKAGADIQPLRDTIDSVIGSGPKGEPIKQYDDESIVRLAEQTRRGVSIATPVFDGAVEADVNEMLEQAGLKVTGQSTLYDGRTGETFDRQVTVGYIYMLKLNHLVDDKIHARSIGPYSLVTQQPLGGKAQFGGQRFGEMEVWALEAYGAAYTLQEMLTVKSDDVAGRTKVYEAIVRGDDTFEAGIPESFNVLVKEMRSLGLSVELENSKVDDVGSTAQLPDAAE.

The protein belongs to the RNA polymerase beta chain family. The RNAP catalytic core consists of 2 alpha, 1 beta, 1 beta' and 1 omega subunit. When a sigma factor is associated with the core the holoenzyme is formed, which can initiate transcription.

It carries out the reaction RNA(n) + a ribonucleoside 5'-triphosphate = RNA(n+1) + diphosphate. Its function is as follows. DNA-dependent RNA polymerase catalyzes the transcription of DNA into RNA using the four ribonucleoside triphosphates as substrates. This chain is DNA-directed RNA polymerase subunit beta, found in Rhizobium meliloti (strain 1021) (Ensifer meliloti).